The chain runs to 165 residues: Polcalcin Jun o 2 (165 aa).

EF-hand domains are found at residues 22-57, 58-86, 91-126, and 127-162; these read QSVH…LGSD, VGEA…FVDL, ASVK…VGEP, and CTIE…EMTD. Asp35, Asn37, Asp39, Lys41, Glu46, Asp71, Asp73, Asp75, Tyr77, Glu82, Asp104, Asp106, Asn108, Ser110, Glu115, Asp140, Asn142, Asp144, and Glu151 together coordinate Ca(2+).

The polypeptide is Polcalcin Jun o 2 (Juniperus oxycedrus (Prickly juniper)).